A 1541-amino-acid chain; its full sequence is Regulator of G-protein signaling loco (1541 aa).

Residues 1-66 (MHHHHPPLPI…RRKKRANYNY (66 aa)) form a disordered region. A compositionally biased stretch (low complexity) spans 11 to 36 (TGASGSTAVGTGAAAAEDASPAANSG). Over residues 40-53 (ISTSTTPSGSNSQQ) the composition is skewed to polar residues. One can recognise a PDZ domain in the interval 71–148 (TVEVRRGYNG…SIRMQIAENY (78 aa)). Positions 182 to 222 (AKLHRLRNSPQKKLNPPEAVEPHKSKSSPDHPTLKPVLEDP) are disordered. Residues 201-214 (VEPHKSKSSPDHPT) are compositionally biased toward basic and acidic residues. The PID domain occupies 247-423 (AALECRVIVG…VVNLVRSMYT (177 aa)). 2 disordered regions span residues 449–473 (GAVA…SNSD) and 708–761 (SEPD…ASMN). Polar residues-rich tracts occupy residues 457 to 473 (PQPS…SNSD) and 744 to 761 (EQQQ…ASMN). An RGS domain is found at 827-943 (SFERMLQDAA…IRSDLYKSCV (117 aa)). A disordered region spans residues 978–1004 (SASNAEDRRRKSLLPWHRKTRSKSRDR). Basic residues predominate over residues 987–999 (RKSLLPWHRKTRS). RBD domains are found at residues 1072-1142 (SLCR…IERR) and 1143-1213 (VAFK…IVMV). The interval 1258 to 1327 (DAAASEKSRP…SEEAATTQAV (70 aa)) is disordered. The segment covering 1273-1285 (MKSNEAPSETSSL) has biased composition (polar residues). The span at 1312–1325 (TSSSQQSEEAATTQ) shows a compositional bias: low complexity. In terms of domain architecture, GoLoco spans 1354–1376 (QDELLEGLKRAQLARLEDQRGTE). The disordered stretch occupies residues 1410-1513 (KVPATPTEIP…ASKPGTFASK (104 aa)). Pro residues predominate over residues 1460 to 1469 (APPPLPPKPK). Polar residues predominate over residues 1483-1499 (PTGNYCNKYSPSKQVPT).

Interacts (via GoLoco and RGS domains) with Galphai (via GDP- or GTP-bound forms). In terms of tissue distribution, expressed in surface and longitudinal glial cells, gut and heart (at protein level).

It localises to the cytoplasm. The protein resides in the cell membrane. It is found in the apical cell membrane. Its function is as follows. Acts as a regulator of G protein signaling (RGS). Modulates G protein alpha subunits nucleotide exchange and hydrolysis activities by functioning either as a GTPase-activating protein (GAP), thereby driving G protein alpha subunits into their inactive GDP-bound form, or as a GDP-dissociation inhibitor (GDI). Confers GDI and GAP activities on G(i) alpha subunit Galphai. Confers GAP activity on G(o)-alpha subunit Galphao and G(i) alpha subunit Galphai. Involved in the dorsal-ventral axis formation of the egg. Acts as a G-protein signaling for glial cell differentiation during embryogenesis; Galphai, Galphao and the G-protein coupled receptor, moody, are required in the surface glia to achieve effective insulation of the nerve cord. May be essential for nurse cell dumping during oogenesis. Required in neuroblast asymmetrical cell division. Plays a role in stress resistance and life span control. The sequence is that of Regulator of G-protein signaling loco (loco) from Drosophila melanogaster (Fruit fly).